A 307-amino-acid polypeptide reads, in one-letter code: D-alanine--D-alanine ligase (307 aa).

One can recognise an ATP-grasp domain in the interval 110–299; that stretch reads KQLWKGAGLP…FDVLVGEILL (190 aa). 136 to 185 provides a ligand contact to ATP; that stretch reads PVIVKPAHEGSSIGMAKADNTEELGEALVAAEKFDQDVLVEAWVNGPEYT. Mg(2+) contacts are provided by D253, E266, and N268.

The protein belongs to the D-alanine--D-alanine ligase family. It depends on Mg(2+) as a cofactor. Requires Mn(2+) as cofactor.

The protein localises to the cytoplasm. It carries out the reaction 2 D-alanine + ATP = D-alanyl-D-alanine + ADP + phosphate + H(+). It functions in the pathway cell wall biogenesis; peptidoglycan biosynthesis. Cell wall formation. The sequence is that of D-alanine--D-alanine ligase from Alcanivorax borkumensis (strain ATCC 700651 / DSM 11573 / NCIMB 13689 / SK2).